Here is a 406-residue protein sequence, read N- to C-terminus: Probable sphingosine-1-phosphate phosphatase (406 aa).

Transmembrane regions (helical) follow at residues 66–86 (ILGEEVFFILALPISTWCVAT) and 92–112 (LCVVLALTIGGGNILKNTFTL). The interval 107-115 (KNTFTLPRP) is phosphatase sequence motif I. Residues 133-136 (PSTH) form a phosphatase sequence motif II region. His-136 functions as the Proton donor in the catalytic mechanism. 2 helical membrane passes run 138–158 (ASAFGLTFYFLIYTYFLFPTI) and 162–182 (FNISLLSMFFIVLFWSTSVMF). The segment at 183 to 194 (SRLYNGHHTPMD) is phosphatase sequence motif III. His-190 serves as the catalytic Nucleophile. 5 consecutive transmembrane segments (helical) span residues 193–213 (MDVIAGLIVAITSILATTYQL), 225–245 (TFLFGPMLYIAILSAILFFHP), 254–274 (AYPETGLVCGASLGSLISLWL), 313–333 (ILIGLVLVGIAKVFSKKFFFF), and 374–394 (LFVYTCVSFTIVSMPYLFYYL).

This sequence belongs to the type 2 lipid phosphate phosphatase family.

The protein localises to the endoplasmic reticulum membrane. Functionally, has enzymatic activity against both sphingosine 1 phosphate (S1P) and dihydro-S1P. Regulates intracellular and extracellular S1P levels. This Dictyostelium discoideum (Social amoeba) protein is Probable sphingosine-1-phosphate phosphatase (sppA).